We begin with the raw amino-acid sequence, 354 residues long: uncharacterized protein (354 aa).

It belongs to the asfivirus B354L family.

This is an uncharacterized protein from African swine fever virus (isolate Tick/South Africa/Pretoriuskop Pr4/1996) (ASFV).